The sequence spans 121 residues: MARYRLGRINEEVKKEISNIIRDDIHDPRLTGMVSVTRVEVTNDLRYAKVFISIFGSDESKTETLEALKSSAGFIRREVGHRVKLRYTPEILLELDESIEHGMHINDLLSNLKEKKRNDNR.

Belongs to the RbfA family. In terms of assembly, monomer. Binds 30S ribosomal subunits, but not 50S ribosomal subunits or 70S ribosomes.

It is found in the cytoplasm. In terms of biological role, one of several proteins that assist in the late maturation steps of the functional core of the 30S ribosomal subunit. Associates with free 30S ribosomal subunits (but not with 30S subunits that are part of 70S ribosomes or polysomes). Required for efficient processing of 16S rRNA. May interact with the 5'-terminal helix region of 16S rRNA. This chain is Ribosome-binding factor A, found in Clostridium novyi (strain NT).